Here is a 163-residue protein sequence, read N- to C-terminus: UPF0587 protein CG4646 (163 aa).

Zn(2+) is bound by residues Cys33, Cys36, Cys68, and Cys71.

It belongs to the UPF0587 family.

This chain is UPF0587 protein CG4646, found in Drosophila melanogaster (Fruit fly).